Reading from the N-terminus, the 206-residue chain is KH domain-containing protein 3 (206 aa).

Positions 1 to 40 (MDTPRRFPTLVQLMQPKAMPVEVLGHLPKRFSWFHSEFLK) are involved in RNA binding. One can recognise a KH; atypical domain in the interval 40-103 (KNPKVVRLEV…SYQEDTIKMI (64 aa)). Over residues 144–153 (GTQRSVEVRE) the composition is skewed to basic and acidic residues. Residues 144–206 (GTQRSVEVRE…EDTRAPVTRL (63 aa)) are disordered. Position 145 is a phosphothreonine (Thr-145). Over residues 166–183 (TGTQQSLEAANQSGTQRS) the composition is skewed to polar residues. Residue Ser-171 is modified to Phosphoserine.

Belongs to the KHDC1 family. As to quaternary structure, component of the subcortical maternal complex (SCMC), at least composed of NLRP5, KHDC3L, OOEP, and TLE6. Within the complex, interacts with NLRP5, KHDC3L and TLE6. The SCMC may facilitate translocation of its components between the nuclear and cytoplasmic compartments. Forms a scaffold complex with OOEP/FLOPED, and interacts with BLM and TRIM25 at DNA replication forks. Interacts with PARP1; the interaction is increased following the formation of DNA double-strand breaks. Interacts with NUMA1.

It localises to the cytoplasm. Its subcellular location is the cell cortex. It is found in the nucleus. The protein resides in the mitochondrion. The protein localises to the cytoskeleton. It localises to the microtubule organizing center. Its subcellular location is the centrosome. It is found in the chromosome. Component of the subcortical maternal complex (SCMC), a multiprotein complex that plays a key role in early embryonic development. The SCMC complex is a structural constituent of cytoplasmic lattices, which consist in fibrous structures found in the cytoplasm of oocytes and preimplantation embryos. They are required to store maternal proteins critical for embryonic development, such as proteins that control epigenetic reprogramming of the preimplantation embryo, and prevent their degradation or activation. KHDC3 ensures proper spindle assembly by regulating the localization of AURKA via RHOA signaling and of PLK1 via a RHOA-independent process. Required for the localization of MAD2L1 to kinetochores to enable spindle assembly checkpoint function. As part of the OOEP-KHDC3 scaffold, recruits BLM and TRIM25 to DNA replication forks, thereby promoting the ubiquitination of BLM by TRIM25, enhancing BLM retainment at replication forks and therefore promoting stalled replication fork restart. Regulates homologous recombination-mediated DNA repair via recruitment of RAD51 to sites of DNA double-strand breaks, and sustainment of PARP1 activity, which in turn modulates downstream ATM or ATR activation. Activation of ATM or ATR in response to DNA double-strand breaks may be cell-type specific. Its role in DNA double-strand break repair is independent of its role in restarting stalled replication forks. Promotes neural stem cell neurogenesis and neuronal differentiation in the hippocampus. May regulate normal development of learning, memory and anxiety. Capable of binding RNA. The sequence is that of KH domain-containing protein 3 (KHDC3L) from Macaca mulatta (Rhesus macaque).